The primary structure comprises 447 residues: Oxysterols receptor LXR-alpha (447 aa).

The disordered stretch occupies residues methionine 1–proline 88. The segment at methionine 1–glutamate 96 is transactivation AF-1; required for ligand-independent transactivation function. Residues asparagine 95–serine 170 constitute a DNA-binding region (nuclear receptor). 2 consecutive NR C4-type zinc fingers follow at residues cysteine 98–cysteine 118 and cysteine 134–cysteine 158. Residues lysine 178–leucine 203 form a disordered region. The segment covering alanine 187 to leucine 203 has biased composition (low complexity). Residues glutamine 205–glutamate 447 form a transactivation AF-2; required for ligand-dependent transactivation function; mediates interaction with CCAR2 region. The region spanning glutamate 209–glutamate 447 is the NR LBD domain.

It belongs to the nuclear hormone receptor family. NR1 subfamily. As to quaternary structure, heterodimer of NR1H3 and RXR (retinoic acid receptor). Interacts with CCAR2 (via N-terminus) in a ligand-independent manner. Interacts with SIRT1 and this interaction is inhibited by CCAR2. In terms of processing, ubiquitinated by UBR5, leading to its degradation: UBR5 specifically recognizes and binds ligand-bound NR1H3 when it is not associated with coactivators (NCOAs). In presence of NCOAs, the UBR5-degron is not accessible, preventing its ubiquitination and degradation.

It localises to the nucleus. It is found in the cytoplasm. In terms of biological role, nuclear receptor that exhibits a ligand-dependent transcriptional activation activity. Interaction with retinoic acid receptor (RXR) shifts RXR from its role as a silent DNA-binding partner to an active ligand-binding subunit in mediating retinoid responses through target genes defined by LXRES. LXRES are DR4-type response elements characterized by direct repeats of two similar hexanuclotide half-sites spaced by four nucleotides. Plays an important role in the regulation of cholesterol homeostasis, regulating cholesterol uptake through MYLIP-dependent ubiquitination of LDLR, VLDLR and LRP8. Interplays functionally with RORA for the regulation of genes involved in liver metabolism. Induces LPCAT3-dependent phospholipid remodeling in endoplasmic reticulum (ER) membranes of hepatocytes, driving SREBF1 processing and lipogenesis. Via LPCAT3, triggers the incorporation of arachidonate into phosphatidylcholines of ER membranes, increasing membrane dynamics and enabling triacylglycerols transfer to nascent very low-density lipoprotein (VLDL) particles. Via LPCAT3 also counteracts lipid-induced ER stress response and inflammation, likely by modulating SRC kinase membrane compartmentalization and limiting the synthesis of lipid inflammatory mediators. The protein is Oxysterols receptor LXR-alpha (NR1H3) of Bos taurus (Bovine).